A 660-amino-acid chain; its full sequence is Bifunctional polymyxin resistance protein ArnA (660 aa).

Residues 1 to 304 (MKAVVFAYHD…TLGLVAGAII (304 aa)) form a formyltransferase ArnAFT region. H104 functions as the Proton donor; for formyltransferase activity in the catalytic mechanism. (6R)-10-formyltetrahydrofolate-binding positions include R114 and 136 to 140 (VSRAD). Residues 314–660 (RRTRVLILGV…KTVELTEPQA (347 aa)) are dehydrogenase ArnADH. Residues D347 and 368–369 (DI) each bind NAD(+). Residues A393, Y398, and 432–433 (TS) each bind UDP-alpha-D-glucuronate. E434 functions as the Proton acceptor; for decarboxylase activity in the catalytic mechanism. Residues R460, N492, 526-535 (KLIDGGRQKR), and Y613 contribute to the UDP-alpha-D-glucuronate site. The Proton donor; for decarboxylase activity role is filled by R619.

This sequence in the N-terminal section; belongs to the Fmt family. UDP-L-Ara4N formyltransferase subfamily. In the C-terminal section; belongs to the NAD(P)-dependent epimerase/dehydratase family. UDP-glucuronic acid decarboxylase subfamily. Homohexamer, formed by a dimer of trimers.

It catalyses the reaction UDP-alpha-D-glucuronate + NAD(+) = UDP-beta-L-threo-pentopyranos-4-ulose + CO2 + NADH. The catalysed reaction is UDP-4-amino-4-deoxy-beta-L-arabinose + (6R)-10-formyltetrahydrofolate = UDP-4-deoxy-4-formamido-beta-L-arabinose + (6S)-5,6,7,8-tetrahydrofolate + H(+). It functions in the pathway nucleotide-sugar biosynthesis; UDP-4-deoxy-4-formamido-beta-L-arabinose biosynthesis; UDP-4-deoxy-4-formamido-beta-L-arabinose from UDP-alpha-D-glucuronate: step 1/3. Its pathway is nucleotide-sugar biosynthesis; UDP-4-deoxy-4-formamido-beta-L-arabinose biosynthesis; UDP-4-deoxy-4-formamido-beta-L-arabinose from UDP-alpha-D-glucuronate: step 3/3. It participates in bacterial outer membrane biogenesis; lipopolysaccharide biosynthesis. In terms of biological role, bifunctional enzyme that catalyzes the oxidative decarboxylation of UDP-glucuronic acid (UDP-GlcUA) to UDP-4-keto-arabinose (UDP-Ara4O) and the addition of a formyl group to UDP-4-amino-4-deoxy-L-arabinose (UDP-L-Ara4N) to form UDP-L-4-formamido-arabinose (UDP-L-Ara4FN). The modified arabinose is attached to lipid A and is required for resistance to polymyxin and cationic antimicrobial peptides. The polypeptide is Bifunctional polymyxin resistance protein ArnA (Enterobacter sp. (strain 638)).